A 289-amino-acid chain; its full sequence is Purine nucleoside phosphorylase (289 aa).

At methionine 1 the chain carries N-acetylmethionine. Phosphate is bound by residues serine 33, histidine 64, and 84–86 (RFH). Tyrosine 88 is a binding site for a purine D-ribonucleoside. Alanine 116 lines the phosphate pocket. A purine D-ribonucleoside-binding residues include glutamate 201 and methionine 219. Serine 220 lines the phosphate pocket. Residues asparagine 243 and histidine 257 each contribute to the a purine D-ribonucleoside site.

This sequence belongs to the PNP/MTAP phosphorylase family. As to quaternary structure, homotrimer.

It is found in the cytoplasm. The enzyme catalyses inosine + phosphate = alpha-D-ribose 1-phosphate + hypoxanthine. It carries out the reaction guanosine + phosphate = alpha-D-ribose 1-phosphate + guanine. The catalysed reaction is 2'-deoxyguanosine + phosphate = 2-deoxy-alpha-D-ribose 1-phosphate + guanine. It catalyses the reaction 2'-deoxyinosine + phosphate = 2-deoxy-alpha-D-ribose 1-phosphate + hypoxanthine. It participates in purine metabolism; purine nucleoside salvage. Its function is as follows. Catalyzes the phosphorolytic breakdown of the N-glycosidic bond in the beta-(deoxy)ribonucleoside molecules, with the formation of the corresponding free purine bases and pentose-1-phosphate. Preferentially acts on 6-oxopurine nucleosides including inosine and guanosine. The protein is Purine nucleoside phosphorylase (Pnp) of Mus musculus (Mouse).